The chain runs to 226 residues: Movement and silencing protein TGBp1 (226 aa).

Residues 1 to 115 (MDILIISLKS…EFSLEPHFYL (115 aa)) form the (+)RNA virus helicase ATP-binding domain. A (+)RNA virus helicase C-terminal domain is found at 116-226 (ETSFRVPRKV…KGLTYVRAGT (111 aa)).

This sequence belongs to the Tymovirales TGBp1 protein family. Homodimer and homooligomer. Interacts with capsid protein. Interacts with host AGO1; this interaction targets the host protein for degradation, thereby suppressing the antiviral RNA silencing.

Its subcellular location is the host cytoplasm. Transports viral genome to neighboring plant cells directly through plasmosdesmata, without any budding. The movement protein allows efficient cell to cell propagation, by bypassing the host cell wall barrier. Increases plasmodesma size exclusion limit. Acts as a suppressor of RNA-mediated gene silencing, also known as post-transcriptional gene silencing (PTGS), a mechanism of plant viral defense that limits the accumulation of viral RNAs. This Brassica campestris (Field mustard) protein is Movement and silencing protein TGBp1.